Consider the following 131-residue polypeptide: C-type natriuretic peptide 1 (131 aa).

The N-terminal stretch at 1–22 (MLYPALLCAALLLIAPLGHTEG) is a signal peptide. Positions 23–109 (RTLHPSPDAI…KRAVMDRSRR (87 aa)) are excised as a propeptide. Cysteine 115 and cysteine 131 form a disulfide bridge.

Belongs to the natriuretic peptide family. As to expression, expressed in brain and to a low extent in atrium.

The protein localises to the secreted. Functionally, exhibits natriuretic and vasodepressant activity. Has a cGMP-stimulating activity. This is C-type natriuretic peptide 1 from Oncorhynchus mykiss (Rainbow trout).